Reading from the N-terminus, the 1122-residue chain is Transcription-repair-coupling factor (1122 aa).

The Helicase ATP-binding domain maps to 593-758; it reads DLRNGMLMDR…MTGLKELSII (166 aa). Residue 606–613 participates in ATP binding; that stretch reads GDVGFGKT. Positions 711–714 match the DEEQ box motif; that stretch reads DEEQ. The Helicase C-terminal domain occupies 779–933; sequence IIRDALLREH…GFTIASRDMD (155 aa).

It in the N-terminal section; belongs to the UvrB family. In the C-terminal section; belongs to the helicase family. RecG subfamily.

The protein resides in the cytoplasm. Its function is as follows. Couples transcription and DNA repair by recognizing RNA polymerase (RNAP) stalled at DNA lesions. Mediates ATP-dependent release of RNAP and its truncated transcript from the DNA, and recruitment of nucleotide excision repair machinery to the damaged site. The polypeptide is Transcription-repair-coupling factor (Rickettsia conorii (strain ATCC VR-613 / Malish 7)).